Reading from the N-terminus, the 88-residue chain is Small ribosomal subunit protein uS17 (88 aa).

This sequence belongs to the universal ribosomal protein uS17 family. Part of the 30S ribosomal subunit.

One of the primary rRNA binding proteins, it binds specifically to the 5'-end of 16S ribosomal RNA. The sequence is that of Small ribosomal subunit protein uS17 from Marinobacter nauticus (strain ATCC 700491 / DSM 11845 / VT8) (Marinobacter aquaeolei).